The sequence spans 434 residues: 5-methylthioadenosine/S-adenosylhomocysteine deaminase (434 aa).

Residues His66 and His68 each coordinate Zn(2+). Positions 95, 148, and 188 each coordinate substrate. Residue His215 coordinates Zn(2+). Residues Glu218 and Asp304 each contribute to the substrate site. Asp304 serves as a coordination point for Zn(2+).

Belongs to the metallo-dependent hydrolases superfamily. MTA/SAH deaminase family. The cofactor is Zn(2+).

It carries out the reaction S-adenosyl-L-homocysteine + H2O + H(+) = S-inosyl-L-homocysteine + NH4(+). The catalysed reaction is S-methyl-5'-thioadenosine + H2O + H(+) = S-methyl-5'-thioinosine + NH4(+). Functionally, catalyzes the deamination of 5-methylthioadenosine and S-adenosyl-L-homocysteine into 5-methylthioinosine and S-inosyl-L-homocysteine, respectively. Is also able to deaminate adenosine. The protein is 5-methylthioadenosine/S-adenosylhomocysteine deaminase of Shouchella clausii (strain KSM-K16) (Alkalihalobacillus clausii).